The following is a 474-amino-acid chain: ATP synthase subunit beta (474 aa).

151–158 (GGAGVGKT) provides a ligand contact to ATP.

It belongs to the ATPase alpha/beta chains family. As to quaternary structure, F-type ATPases have 2 components, CF(1) - the catalytic core - and CF(0) - the membrane proton channel. CF(1) has five subunits: alpha(3), beta(3), gamma(1), delta(1), epsilon(1). CF(0) has three main subunits: a(1), b(2) and c(9-12). The alpha and beta chains form an alternating ring which encloses part of the gamma chain. CF(1) is attached to CF(0) by a central stalk formed by the gamma and epsilon chains, while a peripheral stalk is formed by the delta and b chains.

It localises to the cell inner membrane. It carries out the reaction ATP + H2O + 4 H(+)(in) = ADP + phosphate + 5 H(+)(out). In terms of biological role, produces ATP from ADP in the presence of a proton gradient across the membrane. The catalytic sites are hosted primarily by the beta subunits. This is ATP synthase subunit beta from Ruegeria sp. (strain TM1040) (Silicibacter sp.).